The sequence spans 66 residues: Large ribosomal subunit protein bL33c (66 aa).

Belongs to the bacterial ribosomal protein bL33 family.

The protein resides in the plastid. The protein localises to the chloroplast. The protein is Large ribosomal subunit protein bL33c of Cryptomeria japonica (Japanese cedar).